Here is a 105-residue protein sequence, read N- to C-terminus: Nucleoid-associated protein TTHA1599 (105 aa).

It belongs to the YbaB/EbfC family. In terms of assembly, homodimer.

It localises to the cytoplasm. The protein localises to the nucleoid. In terms of biological role, binds to DNA and alters its conformation. May be involved in regulation of gene expression, nucleoid organization and DNA protection. The protein is Nucleoid-associated protein TTHA1599 of Thermus thermophilus (strain ATCC 27634 / DSM 579 / HB8).